The sequence spans 155 residues: Ribosomal RNA large subunit methyltransferase H (155 aa).

S-adenosyl-L-methionine-binding positions include L73, G104, and 123-128 (LSPLTL).

It belongs to the RNA methyltransferase RlmH family. Homodimer.

The protein resides in the cytoplasm. The catalysed reaction is pseudouridine(1915) in 23S rRNA + S-adenosyl-L-methionine = N(3)-methylpseudouridine(1915) in 23S rRNA + S-adenosyl-L-homocysteine + H(+). In terms of biological role, specifically methylates the pseudouridine at position 1915 (m3Psi1915) in 23S rRNA. The polypeptide is Ribosomal RNA large subunit methyltransferase H (Pseudomonas putida (strain ATCC 700007 / DSM 6899 / JCM 31910 / BCRC 17059 / LMG 24140 / F1)).